Here is a 350-residue protein sequence, read N- to C-terminus: uncharacterized protein (350 aa).

Mn(2+)-binding residues include aspartate 214, aspartate 225, histidine 289, glutamate 318, and glutamate 332.

It belongs to the peptidase M24B family. Mn(2+) is required as a cofactor.

This is an uncharacterized protein from Staphylococcus saprophyticus subsp. saprophyticus (strain ATCC 15305 / DSM 20229 / NCIMB 8711 / NCTC 7292 / S-41).